A 317-amino-acid chain; its full sequence is Pyridoxal 5'-phosphate synthase subunit PdxS (317 aa).

Asp47 lines the D-ribose 5-phosphate pocket. The active-site Schiff-base intermediate with D-ribose 5-phosphate is Lys104. Gly176 serves as a coordination point for D-ribose 5-phosphate. Arg188 serves as a coordination point for D-glyceraldehyde 3-phosphate. Residues Gly237 and 258–259 (GS) contribute to the D-ribose 5-phosphate site.

It belongs to the PdxS/SNZ family. As to quaternary structure, in the presence of PdxT, forms a dodecamer of heterodimers.

The enzyme catalyses aldehydo-D-ribose 5-phosphate + D-glyceraldehyde 3-phosphate + L-glutamine = pyridoxal 5'-phosphate + L-glutamate + phosphate + 3 H2O + H(+). Its pathway is cofactor biosynthesis; pyridoxal 5'-phosphate biosynthesis. Functionally, catalyzes the formation of pyridoxal 5'-phosphate from ribose 5-phosphate (RBP), glyceraldehyde 3-phosphate (G3P) and ammonia. The ammonia is provided by the PdxT subunit. Can also use ribulose 5-phosphate and dihydroxyacetone phosphate as substrates, resulting from enzyme-catalyzed isomerization of RBP and G3P, respectively. The sequence is that of Pyridoxal 5'-phosphate synthase subunit PdxS from Corynebacterium glutamicum (strain ATCC 13032 / DSM 20300 / JCM 1318 / BCRC 11384 / CCUG 27702 / LMG 3730 / NBRC 12168 / NCIMB 10025 / NRRL B-2784 / 534).